A 155-amino-acid chain; its full sequence is Deoxyuridine 5'-triphosphate nucleotidohydrolase (155 aa).

Substrate is bound by residues Arg-74–Gly-76, Asn-87, and Thr-91–Asp-93.

It belongs to the dUTPase family. Mg(2+) is required as a cofactor.

It carries out the reaction dUTP + H2O = dUMP + diphosphate + H(+). It functions in the pathway pyrimidine metabolism; dUMP biosynthesis; dUMP from dCTP (dUTP route): step 2/2. Its function is as follows. This enzyme is involved in nucleotide metabolism: it produces dUMP, the immediate precursor of thymidine nucleotides and it decreases the intracellular concentration of dUTP so that uracil cannot be incorporated into DNA. This is Deoxyuridine 5'-triphosphate nucleotidohydrolase from Cereibacter sphaeroides (strain ATCC 17023 / DSM 158 / JCM 6121 / CCUG 31486 / LMG 2827 / NBRC 12203 / NCIMB 8253 / ATH 2.4.1.) (Rhodobacter sphaeroides).